We begin with the raw amino-acid sequence, 559 residues long: Glucans biosynthesis protein G (559 aa).

Positions 1-37 are cleaved as a signal peptide; sequence MVSLLSCGTSASSHIVKKALTRLSLAMAAGLCFNLAA.

It belongs to the OpgD/OpgG family.

The protein localises to the periplasm. It participates in glycan metabolism; osmoregulated periplasmic glucan (OPG) biosynthesis. Involved in the biosynthesis of osmoregulated periplasmic glucans (OPGs). This Shewanella frigidimarina (strain NCIMB 400) protein is Glucans biosynthesis protein G.